Reading from the N-terminus, the 550-residue chain is Protein UshA (550 aa).

An N-terminal signal peptide occupies residues 1 to 25 (MRFSLSTTAAALAVSLAFAPGWAVA). A divalent metal cation is bound by residues aspartate 41, histidine 43, aspartate 84, asparagine 116, histidine 217, histidine 252, and glutamine 254. An intrachain disulfide couples cysteine 258 to cysteine 275. Residues 375–379 (RSKVR) and 498–504 (FNALGGD) each bind substrate.

This sequence belongs to the 5'-nucleotidase family. Co(2+) serves as cofactor.

It localises to the periplasm. The enzyme catalyses UDP-sugar + H2O = UMP + alpha-D-aldose 1-phosphate.. The catalysed reaction is a ribonucleoside 5'-phosphate + H2O = a ribonucleoside + phosphate. Its function is as follows. Degradation of external UDP-glucose to uridine monophosphate and glucose-1-phosphate, which can then be used by the cell. In Yersinia enterocolitica serotype O:8 / biotype 1B (strain NCTC 13174 / 8081), this protein is Protein UshA (ushA).